Here is a 2144-residue protein sequence, read N- to C-terminus: Cadherin EGF LAG seven-pass G-type receptor 2 (2144 aa).

Cadherin domains follow at residues 1 to 40 (EDQV…APQF), 41 to 146 (LRDS…PPVF), 147 to 248 (EQDE…PPVL), and 253 to 371 (ILFN…SPLL). Topologically, residues 1–1605 (EDQVSYTLAI…GEILPLKTLT (1605 aa)) are extracellular. 4 N-linked (GlcNAc...) asparagine glycosylation sites follow: asparagine 261, asparagine 301, asparagine 407, and asparagine 437. In terms of domain architecture, EGF-like 1; calcium-binding spans 453–511 (DDNICLREPCENYMRCVSVLRFDSSAPFIASSSVLFRPIHPVGGLRCRCPPGFTGDYCE). Disulfide bonds link cysteine 457-cysteine 468, cysteine 462-cysteine 499, cysteine 501-cysteine 510, cysteine 517-cysteine 528, cysteine 522-cysteine 537, cysteine 539-cysteine 548, cysteine 557-cysteine 568, cysteine 562-cysteine 578, and cysteine 580-cysteine 590. The 37-residue stretch at 513–549 (EVDLCYSRPCGPHGHCRSREGGYTCLCRDGYTGEHCE) folds into the EGF-like 2; calcium-binding domain. The EGF-like 3; calcium-binding domain maps to 553-591 (RSGRCTPGVCKNGGTCVNLLVGGFKCDCPSGDFEKPFCQ). Residues 592–796 (VTTRSFPARS…IANNGTVPGC (205 aa)) enclose the Laminin G-like 1 domain. 2 N-linked (GlcNAc...) asparagine glycosylation sites follow: asparagine 726 and asparagine 790. Disulfide bonds link cysteine 770/cysteine 796, cysteine 803/cysteine 814, cysteine 808/cysteine 823, and cysteine 825/cysteine 834. The 37-residue stretch at 799 to 835 (KKNVCDSNTCHNGGTCVNQWDAFSCECPLGFGGKSCA) folds into the EGF-like 4; calcium-binding domain. Asparagine 816 carries the post-translational modification (3R)-3-hydroxyasparagine. The 178-residue stretch at 839–1016 (ANPQRFLGSS…GESINVEPGC (178 aa)) folds into the Laminin G-like 2 domain. N-linked (GlcNAc...) asparagine glycosylation occurs at asparagine 966. 14 disulfide bridges follow: cysteine 986-cysteine 1016, cysteine 1022-cysteine 1033, cysteine 1027-cysteine 1042, cysteine 1044-cysteine 1053, cysteine 1057-cysteine 1068, cysteine 1062-cysteine 1080, cysteine 1082-cysteine 1091, cysteine 1112-cysteine 1124, cysteine 1114-cysteine 1131, cysteine 1133-cysteine 1146, cysteine 1149-cysteine 1161, cysteine 1151-cysteine 1168, cysteine 1170-cysteine 1179, and cysteine 1182-cysteine 1194. Positions 1018-1053 (WPDPCDSNPCPTNSYCSNDWDSYSCSCDPGYYGDNC) constitute an EGF-like 5; calcium-binding domain. At asparagine 1035 the chain carries (3R)-3-hydroxyasparagine. Asparagine 1052 is a glycosylation site (N-linked (GlcNAc...) asparagine). The region spanning 1054–1092 (TNVCDLNPCEHQSACTRKPSAPHGYICECLPNYLGPYCE) is the EGF-like 6; calcium-binding domain. Residues 1108-1147 (TCGPCNCDVSKGFDPDCNKTSGECHCKENHYRPPSSPTCL) form the EGF-like 7; calcium-binding domain. N-linked (GlcNAc...) asparagine glycosylation is present at asparagine 1125. The Laminin EGF-like domain maps to 1149–1196 (CDCYPTGSLSRVCDPEDGQCPCKPGVIGRQCDRCDNPFAEVTTNGCEV). N-linked (GlcNAc...) asparagine glycans are attached at residues asparagine 1249, asparagine 1268, and asparagine 1286. The GAIN-B domain occupies 1424-1594 (ETTVILPESV…AVLMDVSRRE (171 aa)). The interval 1439–1466 (PMVRSAGPGEAQETEELARRQRRHPELS) is disordered. 2 cysteine pairs are disulfide-bonded: cysteine 1544/cysteine 1576 and cysteine 1564/cysteine 1578. The segment at 1544 to 1594 (CVFWNHSILVSGTGGWSARGCEVVFRNESHVSCQCNHMTSFAVLMDVSRRE) is GPS. Asparagine 1548 and asparagine 1570 each carry an N-linked (GlcNAc...) asparagine glycan. Residues 1606–1626 (YVALGVTLAALMITFLFLTLL) form a helical membrane-spanning segment. Residues 1627–1641 (RALRSNQHGIRRNLT) are Cytoplasmic-facing. Residues 1642–1662 (AALGLAQLVFLLGINQADLPF) traverse the membrane as a helical segment. Position 1663 (alanine 1663) is a topological domain, extracellular. A helical membrane pass occupies residues 1664–1684 (CTVIAILLHFLYLCTFSWALL). Residues 1685-1705 (EALHLYRALTEVRDVNASPMR) lie on the Cytoplasmic side of the membrane. The helical transmembrane segment at 1706 to 1726 (FYYMLGWGVPAFITGLAVGLD) threads the bilayer. At 1727 to 1744 (PEGYGNPDFCWLSIYDTL) the chain is on the extracellular side. A helical transmembrane segment spans residues 1745 to 1765 (IWSFAGPVAFAVSMSVFLYIL). Residues 1766 to 1789 (SARASCAAQRQGFEKKGPVSGLRS) are Cytoplasmic-facing. Residues 1790 to 1810 (SFTVLLLLSATWLLALLSVNS) form a helical membrane-spanning segment. At 1811–1816 (DTLLFH) the chain is on the extracellular side. A helical transmembrane segment spans residues 1817–1837 (YLFAACNCVQGPFIFLSYVVL). Residues 1838-2144 (SKEVRKALKF…SEFLFFNFLH (307 aa)) lie on the Cytoplasmic side of the membrane. The segment at 1914-2109 (TLNPGQVPPG…PPRPPPRQSL (196 aa)) is disordered. The span at 1943-1955 (TDSDSDLSLEDDQ) shows a compositional bias: acidic residues. Residues 2016–2025 (GTTTKENSGS) are compositionally biased toward polar residues. Residues 2028–2040 (LEERPRENGDALT) are compositionally biased toward basic and acidic residues. Polar residues predominate over residues 2082–2095 (GTGSSRGSTASEGS).

Belongs to the G-protein coupled receptor 2 family. LN-TM7 subfamily. In terms of assembly, heterodimer of 2 chains generated by proteolytic processing; the large extracellular N-terminal fragment and the membrane-bound C-terminal fragment predominantly remain associated and non-covalently linked. Post-translationally, the iron and 2-oxoglutarate dependent 3-hydroxylation of aspartate and asparagine is (R) stereospecific within EGF domains. In terms of processing, autoproteolytically processed at the GPS region of the GAIN-B domain; this cleavage modulates receptor activity. As to expression, expressed in the brain. High expression in cerebellum and olfactory bulb. Weaker expression in cerebral cortex, hippocampus and brain stem.

The protein resides in the cell membrane. In terms of biological role, receptor that may have an important role in cell/cell signaling during nervous system formation. This chain is Cadherin EGF LAG seven-pass G-type receptor 2, found in Rattus norvegicus (Rat).